The following is an 862-amino-acid chain: Glucans biosynthesis glucosyltransferase H (862 aa).

Residues 1–25 (MELPATSGLNAQPGNAEGTTASTRP) form a disordered region. Positions 7-25 (SGLNAQPGNAEGTTASTRP) are enriched in polar residues. 5 helical membrane passes run 188–210 (RLTLLALMIAQTVAATWAMSSVL), 545–567 (GVMAYLSAPLWFLFLLLSTALLA), 597–619 (ALFSATATVLFLPKILSVLVLWA), 626–648 (GGAVHLALSMVIEAVFSVLAAPV), and 708–730 (FLWWLSPVVGALIVSILLSVFSS).

This sequence belongs to the glycosyltransferase 2 family. OpgH subfamily.

Its subcellular location is the cell inner membrane. It functions in the pathway glycan metabolism; osmoregulated periplasmic glucan (OPG) biosynthesis. Its function is as follows. Involved in the biosynthesis of osmoregulated periplasmic glucans (OPGs). This is Glucans biosynthesis glucosyltransferase H from Ralstonia nicotianae (strain ATCC BAA-1114 / GMI1000) (Ralstonia solanacearum).